An 809-amino-acid polypeptide reads, in one-letter code: Phospholipase D alpha 1 (809 aa).

The C2 domain maps to 1–125 (MAQILLHGTL…LDGHEIDKWV (125 aa)). Residue Asp-186 participates in Ca(2+) binding. The PLD phosphodiesterase 1 domain maps to 326-365 (TMFTHHQKIVVVDSALPGGGGSDKRRIVSFVGGLDLCDGR). Active-site residues include His-331, Lys-333, and Asp-338. Position 331 (His-331) interacts with a 1,2-diacyl-sn-glycero-3-phosphate. Residues His-371 and His-405 each coordinate Ca(2+). A 1,2-diacyl-sn-glycero-3-phosphate is bound by residues Gln-521 and His-660. Positions 655–682 (FMIYVHTKMMIVDDEYIIIGSANINQRS) constitute a PLD phosphodiesterase 2 domain. Active-site residues include His-660, Lys-662, and Asp-667. Glu-721 contributes to the Ca(2+) binding site.

The protein belongs to the phospholipase D family. C2-PLD subfamily. Ca(2+) serves as cofactor.

It carries out the reaction a 1,2-diacyl-sn-glycero-3-phosphocholine + H2O = a 1,2-diacyl-sn-glycero-3-phosphate + choline + H(+). Hydrolyzes glycerol-phospholipids at the terminal phosphodiesteric bond. Plays an important role in various cellular processes. In Vigna unguiculata (Cowpea), this protein is Phospholipase D alpha 1 (PLD1).